The sequence spans 317 residues: Acetyl-coenzyme A carboxylase carboxyl transferase subunit alpha (317 aa).

One can recognise a CoA carboxyltransferase C-terminal domain in the interval 40 to 293 (LEVRVREAIV…GDVIASALAE (254 aa)).

This sequence belongs to the AccA family. In terms of assembly, acetyl-CoA carboxylase is a heterohexamer composed of biotin carboxyl carrier protein (AccB), biotin carboxylase (AccC) and two subunits each of ACCase subunit alpha (AccA) and ACCase subunit beta (AccD).

Its subcellular location is the cytoplasm. The enzyme catalyses N(6)-carboxybiotinyl-L-lysyl-[protein] + acetyl-CoA = N(6)-biotinyl-L-lysyl-[protein] + malonyl-CoA. It participates in lipid metabolism; malonyl-CoA biosynthesis; malonyl-CoA from acetyl-CoA: step 1/1. Component of the acetyl coenzyme A carboxylase (ACC) complex. First, biotin carboxylase catalyzes the carboxylation of biotin on its carrier protein (BCCP) and then the CO(2) group is transferred by the carboxyltransferase to acetyl-CoA to form malonyl-CoA. This chain is Acetyl-coenzyme A carboxylase carboxyl transferase subunit alpha, found in Rhizobium johnstonii (strain DSM 114642 / LMG 32736 / 3841) (Rhizobium leguminosarum bv. viciae).